The sequence spans 211 residues: Protein-methionine-sulfoxide reductase heme-binding subunit MsrQ (211 aa).

Helical transmembrane passes span 8–28 (VIWL…WLVW), 54–74 (FLLA…PLLI), 82–102 (LWCF…ELGV), 116–136 (PYLT…FTST), 153–173 (FVYL…KIIS), and 178–198 (IYAG…LSLF).

The protein belongs to the MsrQ family. As to quaternary structure, heterodimer of a catalytic subunit (MsrP) and a heme-binding subunit (MsrQ). FMN serves as cofactor. It depends on heme b as a cofactor.

The protein resides in the cell inner membrane. In terms of biological role, part of the MsrPQ system that repairs oxidized periplasmic proteins containing methionine sulfoxide residues (Met-O), using respiratory chain electrons. Thus protects these proteins from oxidative-stress damage caused by reactive species of oxygen and chlorine generated by the host defense mechanisms. MsrPQ is essential for the maintenance of envelope integrity under bleach stress, rescuing a wide series of structurally unrelated periplasmic proteins from methionine oxidation, including the primary periplasmic chaperone SurA and the lipoprotein Pal. MsrQ provides electrons for reduction to the reductase catalytic subunit MsrP, using the quinone pool of the respiratory chain. The chain is Protein-methionine-sulfoxide reductase heme-binding subunit MsrQ from Shigella flexneri.